We begin with the raw amino-acid sequence, 351 residues long: MSATFTLGQLAERLGATLRGAEAKVITGLATLQEARPEQLSFLANAQYRKFLAQTQAGAVLLSAADAEGYAGDALIVANPYLAYAQLSHLFDRKPKAAPGIHATAQVADDAQVDPSASVGPYAVIESGARIGAEVSIGAHCVVGARSVIGDGGWLAPRVTLYHDVQIGKRVVIQSGAVIGGEGFGFANEKGVWQKIAQIGGVTIGDDVEIGANTTIDRGALSDTLIGNGVKLDNQIMIAHNVQVGDNTAMAGCCGISGSTKIGKNCMIAGGVGMVGHIEVCDNVFVTGMTMVTRSITEPGAYSSGTAMQPAGEWKKSAARIRQLDEMAKRLRELEKQLAAVTQTANVSSDA.

The active-site Proton acceptor is His240.

The protein belongs to the transferase hexapeptide repeat family. LpxD subfamily. In terms of assembly, homotrimer.

The catalysed reaction is a UDP-3-O-[(3R)-3-hydroxyacyl]-alpha-D-glucosamine + a (3R)-hydroxyacyl-[ACP] = a UDP-2-N,3-O-bis[(3R)-3-hydroxyacyl]-alpha-D-glucosamine + holo-[ACP] + H(+). Its pathway is bacterial outer membrane biogenesis; LPS lipid A biosynthesis. In terms of biological role, catalyzes the N-acylation of UDP-3-O-acylglucosamine using 3-hydroxyacyl-ACP as the acyl donor. Is involved in the biosynthesis of lipid A, a phosphorylated glycolipid that anchors the lipopolysaccharide to the outer membrane of the cell. The chain is UDP-3-O-acylglucosamine N-acyltransferase from Ectopseudomonas mendocina (strain ymp) (Pseudomonas mendocina).